A 122-amino-acid polypeptide reads, in one-letter code: Antitoxin protein TsiV3 (122 aa).

Residues 1–24 (MNNLLSAYVTMLLILLSISGGAIA) form the signal peptide. 2 disulfide bridges follow: Cys-28–Cys-41 and Cys-82–Cys-100.

In terms of assembly, homodimer; dimerization is critical for inhibitory activity. Forms a heterotetramer with VgrG3 composed of one TsiV3 homodimer and two VgrG3 molecules.

Immunity protein that plays a role in preventing early activation of toxin VgrG3. This chain is Antitoxin protein TsiV3, found in Vibrio cholerae serotype O1 (strain ATCC 39315 / El Tor Inaba N16961).